Reading from the N-terminus, the 149-residue chain is Succinate dehydrogenase assembly factor 2, mitochondrial (149 aa).

This sequence belongs to the SDHAF2 family. Interacts with the flavoprotein subunit within the SDH catalytic dimer.

The protein resides in the mitochondrion matrix. Functionally, plays an essential role in the assembly of succinate dehydrogenase (SDH), an enzyme complex (also referred to as respiratory complex II) that is a component of both the tricarboxylic acid (TCA) cycle and the mitochondrial electron transport chain, and which couples the oxidation of succinate to fumarate with the reduction of ubiquinone (coenzyme Q) to ubiquinol. Required for flavinylation (covalent attachment of FAD) of the flavoprotein subunit of the SDH catalytic dimer. This chain is Succinate dehydrogenase assembly factor 2, mitochondrial, found in Scheffersomyces stipitis (strain ATCC 58785 / CBS 6054 / NBRC 10063 / NRRL Y-11545) (Yeast).